Here is an 84-residue protein sequence, read N- to C-terminus: Toxin Acra3 (84 aa).

A signal peptide spans 1–17; the sequence is MKIIFLVLMMILSEVYS. Positions 19–82 constitute an LCN-type CS-alpha/beta domain; it reads RDGYPVHDGT…VYGDDGIFCK (64 aa). 4 disulfide bridges follow: Cys-30/Cys-81, Cys-34/Cys-57, Cys-43/Cys-62, and Cys-47/Cys-64. Ser-83 carries the serine amide modification.

The protein belongs to the long (4 C-C) scorpion toxin superfamily. Sodium channel inhibitor family. Beta subfamily. As to expression, expressed by the venom gland.

The protein resides in the secreted. Toxin with unknown target. In vivo, induces severe neurotoxic events in mice such as excitability and convulsions, leading to the death of the animals within a few minutes after injection. Exerts very strong cytotoxic effect on a mouse brain tumor cell line (BC3H1) (IC(50)=5 mg/ml). It exerts its effects by inducing a stronger necrosis than apoptosis in BC3H1 cells. This chain is Toxin Acra3, found in Androctonus crassicauda (Arabian fat-tailed scorpion).